The primary structure comprises 337 residues: uncharacterized protein (337 aa).

Transmembrane regions (helical) follow at residues 4–24 (FIFF…FSLI) and 26–46 (LLLW…LFAL).

It belongs to the plectrovirus ORF2 family.

The protein localises to the host membrane. This is an uncharacterized protein from Spiroplasma melliferum (SpV1).